Reading from the N-terminus, the 176-residue chain is Caltractin (176 aa).

The disordered stretch occupies residues 1–27 (MNRAAIAAGKPSGSISTGKPRRKTRAE). EF-hand domains are found at residues 31-66 (EMKHEIREAFDLFDADRSGRIDFHELKVAMRALGFD), 67-102 (VKKEEIQRIMNEYDRDQLGEITFQDFEEVMIEKISN), 104-139 (DPTEEILKAFRLFDDDATGRISLKNLRRVAKELSEN), and 140-175 (ISDEELLAMIQEFDRDGDGEIDEEDFIAILRSTSAF). Ca(2+) contacts are provided by Asp-44, Asp-46, Ser-48, Arg-50, and Glu-55. Residues Asp-153, Asp-155, Asp-157, Glu-159, and Asp-164 each coordinate Ca(2+).

Belongs to the centrin family. As to quaternary structure, monomer.

Its subcellular location is the cytoplasm. It is found in the cytoskeleton. It localises to the microtubule organizing center. The protein localises to the centrosome. Functionally, plays a fundamental role in microtubule-organizing center structure and function. The polypeptide is Caltractin (CAL) (Giardia intestinalis (Giardia lamblia)).